A 273-amino-acid polypeptide reads, in one-letter code: DnaJ homolog subfamily C member 27 (273 aa).

Residues 1 to 18 (MESNVPKRKEPLKSLRIK) are required for interaction with MAPK1. GTP-binding positions include 23-30 (GNAEVGKS), 71-75 (DMAGH), and 134-137 (NKID). Residues 217–273 (DSWEMLGVRPGASREEVNKAYRKLAVLLHPDKCVAPGSEDAFKAVVNARTALLKNIK) enclose the J domain.

It belongs to the small GTPase superfamily. Rab family. Interacts directly with MAPK1 (wild-type and kinase-deficient forms). Interacts directly (in GTP-bound form) with MAP2K1 (wild-type and kinase-deficient forms).

The protein localises to the nucleus. Its function is as follows. GTPase which can activate the MEK/ERK pathway and induce cell transformation when overexpressed. May act as a nuclear scaffold for MAPK1, probably by association with MAPK1 nuclear export signal leading to enhanced ERK1/ERK2 signaling. This is DnaJ homolog subfamily C member 27 (Dnajc27) from Rattus norvegicus (Rat).